The chain runs to 107 residues: High mobility group protein HMG-I/HMG-Y (107 aa).

Residues 1 to 13 (MSESGSKSSQPLA) show a composition bias toward polar residues. The segment at 1–107 (MSESGSKSSQ…ISQESSEEEQ (107 aa)) is disordered. Ser-2 carries the post-translational modification N-acetylserine. At Lys-7 the chain carries N6-acetyllysine. ADP-ribosylserine is present on Ser-8. Ser-9 carries the ADP-ribosylserine; alternate modification. Ser-9 bears the Phosphoserine; alternate mark. Lys-15 carries the post-translational modification N6-acetyllysine; alternate. Lys-15 participates in a covalent cross-link: Glycyl lysine isopeptide (Lys-Gly) (interchain with G-Cter in SUMO2); alternate. The segment covering 15–24 (KQEKDGTEKR) has biased composition (basic and acidic residues). Residues 21–31 (TEKRGRGRPRK) constitute a DNA-binding region (a.T hook 1). Position 26 is an asymmetric dimethylarginine; alternate (Arg-26). Omega-N-methylarginine; alternate is present on Arg-26. At Arg-26 the chain carries Symmetric dimethylarginine; alternate. Residue Ser-36 is modified to Phosphoserine; by HIPK2 and CDC2. Thr-39 is modified (phosphothreonine). A phosphoserine mark is found at Ser-44 and Ser-49. The residue at position 53 (Thr-53) is a Phosphothreonine; by HIPK2 and CDC2. 2 consecutive DNA-binding regions (a.T hook) follow at residues 53–63 (TPKRPRGRPKG) and 78–89 (APGRKPRGRPKK). The tract at residues 53-77 (TPKRPRGRPKGSKNKGAAKTRKVTT) is interaction with HIPK2. Basic residues predominate over residues 55-74 (KRPRGRPKGSKNKGAAKTRK). Asymmetric dimethylarginine; by PRMT6; alternate occurs at positions 58 and 60. Omega-N-methylarginine; by PRMT6; alternate occurs at positions 58 and 60. The segment covering 93–107 (EEEEGISQESSEEEQ) has biased composition (acidic residues). Phosphoserine occurs at positions 99, 102, and 103.

The protein belongs to the HMGA family. In terms of assembly, interacts with HIPK2. Post-translationally, isoforms HMG-I and HMG-Y can be phosphorylated by HIPK2. Phosphorylation may modulate DNA-binding affinity. In terms of processing, methylation at Arg-58 is mutually exclusive with methylation at Arg-60.

Its subcellular location is the nucleus. It is found in the chromosome. Its function is as follows. HMG-I/Y bind preferentially to the minor groove of A+T rich regions in double-stranded DNA. It is suggested that these proteins could function in nucleosome phasing and in the 3'-end processing of mRNA transcripts. They are also involved in the transcription regulation of genes containing, or in close proximity to A+T-rich regions. This Mus musculus (Mouse) protein is High mobility group protein HMG-I/HMG-Y (Hmga1).